We begin with the raw amino-acid sequence, 208 residues long: Small ribosomal subunit protein uS4 (208 aa).

One can recognise an S4 RNA-binding domain in the interval 98–159 (RRLDNVIYRL…KSRTVAVITN (62 aa)).

This sequence belongs to the universal ribosomal protein uS4 family. Part of the 30S ribosomal subunit. Contacts protein S5. The interaction surface between S4 and S5 is involved in control of translational fidelity.

One of the primary rRNA binding proteins, it binds directly to 16S rRNA where it nucleates assembly of the body of the 30S subunit. In terms of biological role, with S5 and S12 plays an important role in translational accuracy. This chain is Small ribosomal subunit protein uS4, found in Desulfatibacillum aliphaticivorans.